We begin with the raw amino-acid sequence, 161 residues long: Putative pre-16S rRNA nuclease (161 aa).

The protein belongs to the YqgF nuclease family.

The protein localises to the cytoplasm. In terms of biological role, could be a nuclease involved in processing of the 5'-end of pre-16S rRNA. This is Putative pre-16S rRNA nuclease from Prochlorococcus marinus (strain MIT 9313).